A 269-amino-acid polypeptide reads, in one-letter code: Mitochondrial acidic protein mam33 (269 aa).

Belongs to the MAM33 family.

The protein resides in the cytoplasm. It is found in the mitochondrion matrix. This is Mitochondrial acidic protein mam33 from Schizosaccharomyces pombe (strain 972 / ATCC 24843) (Fission yeast).